Reading from the N-terminus, the 331-residue chain is Anthranilate phosphoribosyltransferase (331 aa).

Residues Gly81, 84 to 85 (GD), Ser89, 91 to 94 (NCST), 109 to 117 (KHGNRAVSS), and Ser121 contribute to the 5-phospho-alpha-D-ribose 1-diphosphate site. Gly81 serves as a coordination point for anthranilate. Ser93 contributes to the Mg(2+) binding site. Asn112 contributes to the anthranilate binding site. Anthranilate is bound at residue Arg167. Mg(2+) is bound by residues Asp226 and Glu227.

The protein belongs to the anthranilate phosphoribosyltransferase family. In terms of assembly, homodimer. Mg(2+) serves as cofactor.

The enzyme catalyses N-(5-phospho-beta-D-ribosyl)anthranilate + diphosphate = 5-phospho-alpha-D-ribose 1-diphosphate + anthranilate. The protein operates within amino-acid biosynthesis; L-tryptophan biosynthesis; L-tryptophan from chorismate: step 2/5. Functionally, catalyzes the transfer of the phosphoribosyl group of 5-phosphorylribose-1-pyrophosphate (PRPP) to anthranilate to yield N-(5'-phosphoribosyl)-anthranilate (PRA). The protein is Anthranilate phosphoribosyltransferase of Oleidesulfovibrio alaskensis (strain ATCC BAA-1058 / DSM 17464 / G20) (Desulfovibrio alaskensis).